The primary structure comprises 280 residues: Truncated lectin 2 (280 aa).

A signal peptide spans 1–26 (MSSSNFSCILSISLTFFILLLNKVNS). Mn(2+) contacts are provided by Glu-148 and Asp-150. Residues Asp-150, Phe-152, Asn-154, and Asp-158 each coordinate Ca(2+). Asp-158 contributes to the Mn(2+) binding site. Asn-163 is a glycosylation site (N-linked (GlcNAc...) asparagine). Position 170 (His-170) interacts with Mn(2+). A glycan (N-linked (GlcNAc...) asparagine) is linked at Asn-272.

The protein belongs to the leguminous lectin family.

This Medicago truncatula (Barrel medic) protein is Truncated lectin 2 (LEC2).